A 523-amino-acid chain; its full sequence is MVAPGLVLGLVLPLILWADRSAGIGFRFASYINNDMVLQKEPAGAVIWGFGTPGATVTVTLRQGRETIMKKVTSVKAHSDTWMVVLDPMKPGGPFEVMAQQTLEKINFTLRVHDVLFGDVWLCSGQSNMQMTVLQIFNATRELSNTAAYQSVRILSVSPTQAEQELEDLVAVDLQWSKPTSENLGHGYFKYMSAVCWLFGRHLYDTLQYPIGLIASSWGGTPIEAWSSGRSLKACGVPKQGSVPYDSVTGPSKHSVLWNAMIHPLCNMTLKGVVWYQGESNINYNTDLYNCTFPALIEDWRETFHRGSQGQTERFFPFGLVQLSSDLSKKSSDDGFPQIRWHQTADFGYVPNPKMPNTFMAVAMDLCDRDSPFGSIHPRDKQTVAYRLHLGARALAYGEKNLTFEGPLPEKIELLAHKGLLNLTYYQQIQVQKKDNKIFEISCCSDRRCKWLPASMSTVSTQSLTLAIDSCRGTVVALRYAWTTWPCEYKQCPLYHPSSALPAPPFIAFITDQDPGHQSNVAK.

The signal sequence occupies residues 1–23 (MVAPGLVLGLVLPLILWADRSAG). Asparagine 107, asparagine 138, asparagine 267, asparagine 290, asparagine 401, and asparagine 422 each carry an N-linked (GlcNAc...) asparagine glycan.

It is found in the lysosome. The catalysed reaction is N-acetyl-9-O-acetylneuraminate + H2O = N-acetylneuraminate + acetate + H(+). The enzyme catalyses an Ac-O-9-sialoglycoconjugate + H2O = a sialoglycoconjugate + acetate + H(+). Its function is as follows. Catalyzes the removal of O-acetyl ester groups from position 9 of the free diacetylated sialate N-acetyl-9-O-acetylneuraminate (Neu5,9Ac2) in the cytosol and of the diacetylated sialate residues of sialylglycoconjugates in the lysosomes. Together with the sialate-O-acetyltransferase they regulate the balance of acetylated sialoglycoconjugates, key players in various processes such as cell-cell interactions, host-pathogen recognition, and tumor antigenicity. The chain is Sialate O-acetylesterase (SIAE) from Pongo abelii (Sumatran orangutan).